A 62-amino-acid polypeptide reads, in one-letter code: Large ribosomal subunit protein eL24 (62 aa).

Residues C6, C9, C32, and C36 each coordinate Zn(2+). The C4-type zinc finger occupies 6-36 (CSFCGELLEPGTGLLFAKRDGSTYYFCSSKC).

The protein belongs to the eukaryotic ribosomal protein eL24 family. In terms of assembly, part of the 50S ribosomal subunit. Forms a cluster with proteins L3 and L14. It depends on Zn(2+) as a cofactor.

In terms of biological role, binds to the 23S rRNA. This chain is Large ribosomal subunit protein eL24, found in Methanococcoides burtonii (strain DSM 6242 / NBRC 107633 / OCM 468 / ACE-M).